Reading from the N-terminus, the 491-residue chain is Serralysin (491 aa).

A propeptide spanning residues 1–16 (MGSFLLKKAVGLSNIS) is cleaved from the precursor. Zn(2+) is bound at residue H186. E187 is a catalytic residue. Positions 190, 196, and 226 each coordinate Zn(2+). Positions 263, 265, 295, 297, 298, 300, 337, 339, 344, 346, 348, 353, 355, 357, 361, 362, 364, 366, 370, 373, 384, 388, 389, 391, 402, 409, and 419 each coordinate Ca(2+). Hemolysin-type calcium-binding repeat units follow at residues 342-359 (IGGF…DNTL), 360-377 (IGGE…NNTI), and 378-395 (YGGR…SNTF).

This sequence belongs to the peptidase M10B family. The cofactor is Ca(2+). Requires Zn(2+) as cofactor.

The protein resides in the secreted. The enzyme catalyses Preferential cleavage of bonds with hydrophobic residues in P1'.. Its activity is regulated as follows. Ca(2+) increases protease activity. In terms of biological role, one of the virulence factors produced during swarmer cell differentiation of the bacteria, which seems to be associated with pathogenesis. The protease activity is limited to IgA1, IgA2, as well as IgG degradation. The protein is Serralysin (zapA) of Proteus mirabilis.